Here is a 184-residue protein sequence, read N- to C-terminus: GMP synthase [glutamine-hydrolyzing] subunit A (184 aa).

The region spanning 3-184 (PLYVVNNHGQ…FENFDGICSE (182 aa)) is the Glutamine amidotransferase type-1 domain. The Nucleophile role is filled by C75. Residues H162 and E164 contribute to the active site.

Heterodimer composed of a glutamine amidotransferase subunit (A) and a GMP-binding subunit (B).

It catalyses the reaction XMP + L-glutamine + ATP + H2O = GMP + L-glutamate + AMP + diphosphate + 2 H(+). It participates in purine metabolism; GMP biosynthesis; GMP from XMP (L-Gln route): step 1/1. Catalyzes the synthesis of GMP from XMP. This Methanoculleus marisnigri (strain ATCC 35101 / DSM 1498 / JR1) protein is GMP synthase [glutamine-hydrolyzing] subunit A.